Consider the following 156-residue polypeptide: SsrA-binding protein (156 aa).

This sequence belongs to the SmpB family.

The protein localises to the cytoplasm. Functionally, required for rescue of stalled ribosomes mediated by trans-translation. Binds to transfer-messenger RNA (tmRNA), required for stable association of tmRNA with ribosomes. tmRNA and SmpB together mimic tRNA shape, replacing the anticodon stem-loop with SmpB. tmRNA is encoded by the ssrA gene; the 2 termini fold to resemble tRNA(Ala) and it encodes a 'tag peptide', a short internal open reading frame. During trans-translation Ala-aminoacylated tmRNA acts like a tRNA, entering the A-site of stalled ribosomes, displacing the stalled mRNA. The ribosome then switches to translate the ORF on the tmRNA; the nascent peptide is terminated with the 'tag peptide' encoded by the tmRNA and targeted for degradation. The ribosome is freed to recommence translation, which seems to be the essential function of trans-translation. The chain is SsrA-binding protein from Paracoccus denitrificans (strain Pd 1222).